The primary structure comprises 28 residues: MDVAEYAAHDATGLAELIREGQVSACEV.

Homodimer.

The enzyme catalyses an anilide + H2O = aniline + a carboxylate + H(+). The sequence is that of Aryl acylamidase from Nocardia globerula.